Consider the following 592-residue polypeptide: Aspartate--tRNA(Asp/Asn) ligase (592 aa).

Glutamate 175 serves as a coordination point for L-aspartate. The aspartate stretch occupies residues 199–202; the sequence is QLFK. Arginine 221 serves as a coordination point for L-aspartate. Residues 221-223 and glutamine 230 contribute to the ATP site; that span reads RDE. Histidine 450 contacts L-aspartate. Position 483 (glutamate 483) interacts with ATP. An L-aspartate-binding site is contributed by arginine 490. Residue 535–538 coordinates ATP; sequence GLDR.

It belongs to the class-II aminoacyl-tRNA synthetase family. Type 1 subfamily. As to quaternary structure, homodimer.

Its subcellular location is the cytoplasm. It carries out the reaction tRNA(Asx) + L-aspartate + ATP = L-aspartyl-tRNA(Asx) + AMP + diphosphate. Its function is as follows. Aspartyl-tRNA synthetase with relaxed tRNA specificity since it is able to aspartylate not only its cognate tRNA(Asp) but also tRNA(Asn). Reaction proceeds in two steps: L-aspartate is first activated by ATP to form Asp-AMP and then transferred to the acceptor end of tRNA(Asp/Asn). This Acinetobacter baumannii (strain ATCC 17978 / DSM 105126 / CIP 53.77 / LMG 1025 / NCDC KC755 / 5377) protein is Aspartate--tRNA(Asp/Asn) ligase.